Reading from the N-terminus, the 329-residue chain is Sulfate-binding protein (329 aa).

Positions 1–19 are cleaved as a signal peptide; it reads MNKWGVGLTFLLAATSVMA.

The protein belongs to the prokaryotic sulfate-binding protein family.

It localises to the periplasm. Its function is as follows. This protein specifically binds sulfate and is involved in its transmembrane transport. This chain is Sulfate-binding protein (sbp), found in Escherichia coli (strain K12).